A 107-amino-acid polypeptide reads, in one-letter code: Latency-related protein 2 (107 aa).

The span at 1 to 44 shows a compositional bias: pro residues; the sequence is MAPPLPRTPTPTHPHSHAPPLPRTPTPAHPHSHAPPLPRTPTPT. Residues 1 to 63 are disordered; the sequence is MAPPLPRTPT…SIQHRQGKDT (63 aa). 3 tandem repeats follow at residues 2 to 17, 18 to 33, and 34 to 49. The segment at 2–49 is 3 X 17 AA tandem repeats; that stretch reads APPLPRTPTPTHPHSHAPPLPRTPTPAHPHSHAPPLPRTPTPTHPHSH. Positions 46–58 are enriched in basic residues; it reads PHSHAPPRSIQHR.

The sequence is that of Latency-related protein 2 from Homo sapiens (Human).